The following is a 212-amino-acid chain: Imidazole glycerol phosphate synthase subunit HisH (212 aa).

Positions 3–212 constitute a Glutamine amidotransferase type-1 domain; it reads DIAIVDYGMG…LGNFVRWKPV (210 aa). C82 (nucleophile) is an active-site residue. Active-site residues include H191 and E193.

In terms of assembly, heterodimer of HisH and HisF.

Its subcellular location is the cytoplasm. The catalysed reaction is 5-[(5-phospho-1-deoxy-D-ribulos-1-ylimino)methylamino]-1-(5-phospho-beta-D-ribosyl)imidazole-4-carboxamide + L-glutamine = D-erythro-1-(imidazol-4-yl)glycerol 3-phosphate + 5-amino-1-(5-phospho-beta-D-ribosyl)imidazole-4-carboxamide + L-glutamate + H(+). The enzyme catalyses L-glutamine + H2O = L-glutamate + NH4(+). The protein operates within amino-acid biosynthesis; L-histidine biosynthesis; L-histidine from 5-phospho-alpha-D-ribose 1-diphosphate: step 5/9. Its function is as follows. IGPS catalyzes the conversion of PRFAR and glutamine to IGP, AICAR and glutamate. The HisH subunit catalyzes the hydrolysis of glutamine to glutamate and ammonia as part of the synthesis of IGP and AICAR. The resulting ammonia molecule is channeled to the active site of HisF. This is Imidazole glycerol phosphate synthase subunit HisH from Nitrosospira multiformis (strain ATCC 25196 / NCIMB 11849 / C 71).